Reading from the N-terminus, the 635-residue chain is Frizzled and smoothened-like protein C (635 aa).

The N-terminal stretch at 1-20 (MKFKLIIFIIIIYIIKILKS) is a signal peptide. At 21-244 (EILNEFGYGL…NKWVQMYKMS (224 aa)) the chain is on the extracellular side. An FZ domain is found at 32–166 (DENLKCLSFI…LTKYGYTENN (135 aa)). Intrachain disulfides connect C37-C108 and C50-C101. 5 N-linked (GlcNAc...) asparagine glycosylation sites follow: N65, N141, N156, N185, and N203. Residues 245–265 (IVLSTLSFICSIYNIITFGLL) form a helical membrane-spanning segment. At 266–275 (SKLKSKYNLC) the chain is on the cytoplasmic side. Residues 276 to 296 (ITFFSVSTVLMSLMDIVTYGI) form a helical membrane-spanning segment. Residues 297 to 314 (GYEELLCPESGRYAIQSD) lie on the Extracellular side of the membrane. The helical transmembrane segment at 315-335 (VACGVTGAFFHIGITTGVLWW) threads the bilayer. Topologically, residues 336–356 (TTMSICLYSEVKRFKMISFRY) are cytoplasmic. A helical transmembrane segment spans residues 357-377 (IIIFNSVISLILLIIPLSGQA). Topologically, residues 378 to 398 (FMSGNGSLGCWIRKTWYANGT) are extracellular. N-linked (GlcNAc...) asparagine glycans are attached at residues N382 and N396. Residues 399–419 (FWIPCGISLFIGAICIVLVIY) traverse the membrane as a helical segment. Residues 420–440 (EIFKISRNLSKDNKPLMFQIR) lie on the Cytoplasmic side of the membrane. The helical transmembrane segment at 441 to 461 (PFLCVLLVGGSFLYLFIFYFN) threads the bilayer. At 462-496 (NERNLDKYKAAIPSYVQCLLSSDENGEDCLTDGPG) the chain is on the extracellular side. Residues 497-517 (FGAYFTFYFFTRLFGITSFSI) form a helical membrane-spanning segment. Residues 518–635 (YGTSKIARDI…SSKDSNTNSF (118 aa)) are Cytoplasmic-facing. Residues 559-594 (SISGSNQKRFNRNGSNFNMKQNKSNPNDSISLSVVE) are compositionally biased toward polar residues. A disordered region spans residues 559–635 (SISGSNQKRF…SSKDSNTNSF (77 aa)). The stretch at 594 to 623 (ESTKKQDTENELESNIETKENRSTDISIEN) forms a coiled coil. The span at 623-635 (NTTSSKDSNTNSF) shows a compositional bias: low complexity.

Belongs to the G-protein coupled receptor Fz/Smo family.

It is found in the membrane. The chain is Frizzled and smoothened-like protein C (fslC) from Dictyostelium discoideum (Social amoeba).